Reading from the N-terminus, the 215-residue chain is Phosphatidylserine decarboxylase proenzyme (215 aa).

The active-site Schiff-base intermediate with substrate; via pyruvic acid is Ser185. Ser185 is modified (pyruvic acid (Ser); by autocatalysis).

Belongs to the phosphatidylserine decarboxylase family. PSD-A subfamily. As to quaternary structure, heterodimer of a large membrane-associated beta subunit and a small pyruvoyl-containing alpha subunit. The cofactor is pyruvate. Is synthesized initially as an inactive proenzyme. Formation of the active enzyme involves a self-maturation process in which the active site pyruvoyl group is generated from an internal serine residue via an autocatalytic post-translational modification. Two non-identical subunits are generated from the proenzyme in this reaction, and the pyruvate is formed at the N-terminus of the alpha chain, which is derived from the carboxyl end of the proenzyme. The post-translation cleavage follows an unusual pathway, termed non-hydrolytic serinolysis, in which the side chain hydroxyl group of the serine supplies its oxygen atom to form the C-terminus of the beta chain, while the remainder of the serine residue undergoes an oxidative deamination to produce ammonia and the pyruvoyl prosthetic group on the alpha chain.

It is found in the cell membrane. The catalysed reaction is a 1,2-diacyl-sn-glycero-3-phospho-L-serine + H(+) = a 1,2-diacyl-sn-glycero-3-phosphoethanolamine + CO2. It functions in the pathway phospholipid metabolism; phosphatidylethanolamine biosynthesis; phosphatidylethanolamine from CDP-diacylglycerol: step 2/2. Functionally, catalyzes the formation of phosphatidylethanolamine (PtdEtn) from phosphatidylserine (PtdSer). This is Phosphatidylserine decarboxylase proenzyme from Streptomyces griseus subsp. griseus (strain JCM 4626 / CBS 651.72 / NBRC 13350 / KCC S-0626 / ISP 5235).